Reading from the N-terminus, the 289-residue chain is Inorganic pyrophosphatase (289 aa).

An N-acetylserine modification is found at serine 2. Lysine 57 is modified (N6-acetyllysine). Mg(2+)-binding residues include aspartate 116, aspartate 121, and aspartate 153. Serine 250 carries the post-translational modification Phosphoserine.

Belongs to the PPase family. As to quaternary structure, homodimer. It depends on Mg(2+) as a cofactor. Post-translationally, the N-terminus is blocked. In terms of tissue distribution, highest levels are found in retinal rod outer segments.

The protein localises to the cytoplasm. It carries out the reaction diphosphate + H2O = 2 phosphate + H(+). The polypeptide is Inorganic pyrophosphatase (PPA1) (Bos taurus (Bovine)).